The sequence spans 465 residues: Cysteine--tRNA ligase (465 aa).

Cys30 serves as a coordination point for Zn(2+). The 'HIGH' region signature appears at Ile32–His42. Residues Cys214, His239, and Glu243 each contribute to the Zn(2+) site. Residues Lys271–Ser275 carry the 'KMSKS' region motif. Residue Lys274 participates in ATP binding.

This sequence belongs to the class-I aminoacyl-tRNA synthetase family. Monomer. Zn(2+) is required as a cofactor.

It is found in the cytoplasm. The enzyme catalyses tRNA(Cys) + L-cysteine + ATP = L-cysteinyl-tRNA(Cys) + AMP + diphosphate. The sequence is that of Cysteine--tRNA ligase from Burkholderia thailandensis (strain ATCC 700388 / DSM 13276 / CCUG 48851 / CIP 106301 / E264).